Reading from the N-terminus, the 230-residue chain is Large ribosomal subunit protein uL1 (230 aa).

Belongs to the universal ribosomal protein uL1 family. Part of the 50S ribosomal subunit.

Binds directly to 23S rRNA. The L1 stalk is quite mobile in the ribosome, and is involved in E site tRNA release. Its function is as follows. Protein L1 is also a translational repressor protein, it controls the translation of the L11 operon by binding to its mRNA. In Leptospira borgpetersenii serovar Hardjo-bovis (strain L550), this protein is Large ribosomal subunit protein uL1.